The sequence spans 206 residues: Putative apoptosis inhibitor 021L (206 aa).

The span at 95–105 shows a compositional bias: polar residues; it reads TSKSPVSNQPS. A disordered region spans residues 95-114; the sequence is TSKSPVSNQPSPEEDEPIPD. The RING-type zinc finger occupies 157-195; the sequence is CVVCQANVRNVVFVPCNHLATCISCSANPLMPKKCPMCR.

This sequence belongs to the IIV-6 193R family.

Plays a role early in infection by preventing host cell apoptosis. This is Putative apoptosis inhibitor 021L from Aedes vexans (Inland floodwater mosquito).